Consider the following 822-residue polypeptide: Microcephalin (822 aa).

Residues 10 to 99 (AFLKDVVAYV…ALVDESLFPA (90 aa)) form the BRCT 1 domain. Disordered stretches follow at residues 182 to 203 (MKEK…SQQN), 219 to 243 (PLSS…DQER), and 266 to 295 (SSFY…ESIN). Polar residues-rich tracts occupy residues 189–203 (LSPT…SQQN) and 219–235 (PLSS…SSFG). Ser273, Ser290, and Ser327 each carry phosphoserine. Phosphothreonine is present on Thr329. Disordered stretches follow at residues 335 to 366 (EHQV…LKKR), 498 to 567 (NDSP…SPED), and 594 to 636 (TGYS…PTRT). The span at 522-541 (HPDTLSSSAHHITPLKGNST) shows a compositional bias: polar residues. Basic and acidic residues-rich tracts occupy residues 542-553 (ETRDPGDGKGSP) and 625-634 (KKSEKEEKPT). BRCT domains lie at 627–717 (SEKE…PFEL) and 738–820 (YQGT…NYQL).

In terms of assembly, interacts with CDC27 and maybe other components of the APC/C complex. Interacts with histone variant H2AX under DNA damage conditions. High levels of expression are found in the developing forebrain and, in particular, in the walls of the lateral ventricles.

The protein resides in the cytoplasm. The protein localises to the cytoskeleton. It is found in the microtubule organizing center. It localises to the centrosome. In terms of biological role, implicated in chromosome condensation and DNA damage induced cellular responses. May play a role in neurogenesis and regulation of the size of the cerebral cortex. This is Microcephalin from Mus musculus (Mouse).